The sequence spans 345 residues: Putative membrane protein ORF59 (345 aa).

4 consecutive transmembrane segments (helical) span residues 46 to 63 (LVFAYVTLVLLYVIMMLI), 101 to 118 (IVFVALGVNFLLVILVFL), 147 to 165 (IFGIMSFIFVFIITVFSIL), and 265 to 286 (VVPVILLVMFILYMFLHLWMVI).

The protein resides in the membrane. The chain is Putative membrane protein ORF59 (ORF59) from Ictalurid herpesvirus 1 (strain Auburn) (IcHV-1).